We begin with the raw amino-acid sequence, 265 residues long: Tryptophan synthase alpha chain (265 aa).

Catalysis depends on proton acceptor residues glutamate 49 and aspartate 60.

This sequence belongs to the TrpA family. As to quaternary structure, tetramer of two alpha and two beta chains.

It catalyses the reaction (1S,2R)-1-C-(indol-3-yl)glycerol 3-phosphate + L-serine = D-glyceraldehyde 3-phosphate + L-tryptophan + H2O. The protein operates within amino-acid biosynthesis; L-tryptophan biosynthesis; L-tryptophan from chorismate: step 5/5. Functionally, the alpha subunit is responsible for the aldol cleavage of indoleglycerol phosphate to indole and glyceraldehyde 3-phosphate. The polypeptide is Tryptophan synthase alpha chain (Cupriavidus taiwanensis (strain DSM 17343 / BCRC 17206 / CCUG 44338 / CIP 107171 / LMG 19424 / R1) (Ralstonia taiwanensis (strain LMG 19424))).